Consider the following 166-residue polypeptide: MAIKLEDKKAIVAEVNEAAKVALSAVVADARGVTVSAMTGLRKEAREAGVYVRVVRNTLLKRAVEGTEFSILNDAFKGPTLIAFSNEHPGAAARLFKEFAKGQDKFEIKAAAFDGNFIAANQIDVLATLPTRDEAIARLMSVIQGATSKLARTLAAIRDQKEATAA.

This sequence belongs to the universal ribosomal protein uL10 family. In terms of assembly, part of the ribosomal stalk of the 50S ribosomal subunit. The N-terminus interacts with L11 and the large rRNA to form the base of the stalk. The C-terminus forms an elongated spine to which L12 dimers bind in a sequential fashion forming a multimeric L10(L12)X complex.

In terms of biological role, forms part of the ribosomal stalk, playing a central role in the interaction of the ribosome with GTP-bound translation factors. The protein is Large ribosomal subunit protein uL10 of Pseudomonas putida (strain GB-1).